Reading from the N-terminus, the 757-residue chain is Dapper homolog 2 (757 aa).

Positions 1-281 are inhibition of Nodal signaling; the sequence is MWAPSGQGPA…QSPLFALPKE (281 aa). Residues 55-107 are a coiled coil; that stretch reads RGQELRLEAALTALREQLSRLRRQDAGLKTHLDQLDQQISELQLDVSRSSCEA. Disordered regions lie at residues 486-540, 584-684, and 696-728; these read RRRV…CSES, RWQS…EGCF, and AEAG…PPVP. Composition is skewed to basic and acidic residues over residues 505–516 and 631–644; these read ERQRVTERDPSR and ACAR…EHSA. Residues 645–656 are compositionally biased toward polar residues; the sequence is DCTSLYHSTIAE. The segment covering 664–673 has biased composition (basic and acidic residues); sequence SDHTANRFGD. A PDZ-binding motif is present at residues 754-757; that stretch reads MTMV.

This sequence belongs to the dapper family. In terms of assembly, can form homodimers and heterodimers with DACT1 or DACT3. Interacts with CSNK1D, PKA catalytic subunit, PKC-type kinase, CSNK2B, DVL1, DVL2, DVL3, VANGL1, VANGL2, TGFBR1, CTNNB1, CTNND2, CTNND1, LEF1, TCF7, TCF7L1 and HDAC1. In terms of tissue distribution, expressed in kidney (inner medullary collecting duct). Expressed in epidermal keratinocytes and hair follicles.

Its function is as follows. Involved in regulation of intracellular signaling pathways during development. Negatively regulates the Nodal signaling pathway, possibly by promoting the lysosomal degradation of Nodal receptors, such as TGFBR1. May be involved in control of the morphogenetic behavior of kidney ureteric bud cells by keeping cells epithelial and restraining their mesenchymal character. May play an inhibitory role in the re-epithelialization of skin wounds by attenuating TGF-beta signaling. This Mus musculus (Mouse) protein is Dapper homolog 2 (Dact2).